Reading from the N-terminus, the 161-residue chain is NADH-quinone oxidoreductase subunit I (161 aa).

4Fe-4S ferredoxin-type domains follow at residues 52 to 82 (LRRYPNGEERCIACKLCEAVCPAQAITIESS) and 92 to 121 (TRYDIDMMKCIYCGLCEESCPVDAIVQGPN). Residues cysteine 62, cysteine 65, cysteine 68, cysteine 72, cysteine 101, cysteine 104, cysteine 107, and cysteine 111 each coordinate [4Fe-4S] cluster.

This sequence belongs to the complex I 23 kDa subunit family. NDH-1 is composed of 14 different subunits. Subunits NuoA, H, J, K, L, M, N constitute the membrane sector of the complex. It depends on [4Fe-4S] cluster as a cofactor.

It localises to the cell inner membrane. It catalyses the reaction a quinone + NADH + 5 H(+)(in) = a quinol + NAD(+) + 4 H(+)(out). In terms of biological role, NDH-1 shuttles electrons from NADH, via FMN and iron-sulfur (Fe-S) centers, to quinones in the respiratory chain. The immediate electron acceptor for the enzyme in this species is believed to be ubiquinone. Couples the redox reaction to proton translocation (for every two electrons transferred, four hydrogen ions are translocated across the cytoplasmic membrane), and thus conserves the redox energy in a proton gradient. The chain is NADH-quinone oxidoreductase subunit I from Pelagibacter ubique (strain HTCC1062).